The sequence spans 268 residues: Satratoxin biosynthesis SC1 cluster protein 4 (268 aa).

4 helical membrane-spanning segments follow: residues 34–54 (VWLV…VHIF), 78–98 (LFAI…GLAI), 113–133 (HLAG…IKIV), and 145–165 (AVIW…APIY).

The protein belongs to the SAT4 family.

It is found in the membrane. It participates in mycotoxin biosynthesis. In terms of biological role, part of the satratoxin SC1 cluster involved in the biosynthesis of satratoxins, trichothecene mycotoxins that are associated with human food poisonings. Satratoxins are suggested to be made by products of multiple gene clusters (SC1, SC2 and SC3) that encode 21 proteins in all, including polyketide synthases, acetyltransferases, and other enzymes expected to modify the trichothecene skeleton. SC1 encodes 10 proteins, SAT1 to SAT10. The largest are SAT8, which encodes a putative polyketide synthase (PKS) with a conventional non-reducing architecture, and SAT10, a putative protein containing four ankyrin repeats and thus may be involved in protein scaffolding. The putative short-chain reductase SAT3 may assist the PKS in some capacity. SAT6 contains a secretory lipase domain and acts probably as a trichothecene esterase. SAT5 encodes a putative acetyltransferase, and so, with SAT6, may affect endogenous protection from toxicity. The probable transcription factor SAT9 may regulate the expression of the SC1 cluster. SC2 encodes proteins SAT11 to SAT16, the largest of which encodes the putative reducing PKS SAT13. SAT11 is a cytochrome P450 monooxygenase, while SAT14 and SAT16 are probable acetyltransferases. The SC2 cluster may be regulated by the transcription factor SAT15. SC3 is a small cluster that encodes 5 proteins, SAT17 to SAT21. SAT21 is a putative MFS-type transporter which may have a role in exporting secondary metabolites. The four other proteins putatively encoded in SC3 include the taurine hydroxylase-like protein SAT17, the O-methyltransferase SAT18, the acetyltransferase SAT19, and the Cys6-type zinc finger SAT20, the latter being probably involved in regulation of SC3 expression. In Stachybotrys chartarum (strain CBS 109288 / IBT 7711) (Toxic black mold), this protein is Satratoxin biosynthesis SC1 cluster protein 4.